We begin with the raw amino-acid sequence, 229 residues long: Ribonuclease 3 (229 aa).

The RNase III domain maps to 5–127 (LSRLERQLGY…LIGAIYLDAG (123 aa)). E40 lines the Mg(2+) pocket. D44 is an active-site residue. Mg(2+) is bound by residues D113 and E116. E116 is a catalytic residue. Positions 154–224 (DPKTRLQEFL…AAAALIALGV (71 aa)) constitute a DRBM domain.

It belongs to the ribonuclease III family. Homodimer. Mg(2+) serves as cofactor.

The protein resides in the cytoplasm. The enzyme catalyses Endonucleolytic cleavage to 5'-phosphomonoester.. In terms of biological role, digests double-stranded RNA. Involved in the processing of primary rRNA transcript to yield the immediate precursors to the large and small rRNAs (23S and 16S). Processes some mRNAs, and tRNAs when they are encoded in the rRNA operon. Processes pre-crRNA and tracrRNA of type II CRISPR loci if present in the organism. The polypeptide is Ribonuclease 3 (Pseudomonas syringae pv. tomato (strain ATCC BAA-871 / DC3000)).